Reading from the N-terminus, the 280-residue chain is Urease accessory protein UreD 1 (280 aa).

Belongs to the UreD family. As to quaternary structure, ureD, UreF and UreG form a complex that acts as a GTP-hydrolysis-dependent molecular chaperone, activating the urease apoprotein by helping to assemble the nickel containing metallocenter of UreC. The UreE protein probably delivers the nickel.

Its subcellular location is the cytoplasm. Required for maturation of urease via the functional incorporation of the urease nickel metallocenter. This chain is Urease accessory protein UreD 1, found in Brucella melitensis biotype 1 (strain ATCC 23456 / CCUG 17765 / NCTC 10094 / 16M).